The chain runs to 58 residues: Ribulose bisphosphate carboxylase large chain (58 aa).

Positions Met1–Ser2 are excised as a propeptide. Pro3 carries the N-acetylproline modification. Position 14 is an N6,N6,N6-trimethyllysine (Lys14).

It belongs to the RuBisCO large chain family. Type I subfamily. Heterohexadecamer of 8 large chains and 8 small chains.

It localises to the plastid. The protein localises to the chloroplast. It carries out the reaction 2 (2R)-3-phosphoglycerate + 2 H(+) = D-ribulose 1,5-bisphosphate + CO2 + H2O. The enzyme catalyses D-ribulose 1,5-bisphosphate + O2 = 2-phosphoglycolate + (2R)-3-phosphoglycerate + 2 H(+). Functionally, ruBisCO catalyzes two reactions: the carboxylation of D-ribulose 1,5-bisphosphate, the primary event in carbon dioxide fixation, as well as the oxidative fragmentation of the pentose substrate in the photorespiration process. Both reactions occur simultaneously and in competition at the same active site. The protein is Ribulose bisphosphate carboxylase large chain (rbcL) of Euphorbia characias (Albanian spurge).